Reading from the N-terminus, the 445-residue chain is Ribosomal protein uS12 methylthiotransferase RimO (445 aa).

The 116-residue stretch at 6-121 (KKVAVVTLGC…ILETLEEAEK (116 aa)) folds into the MTTase N-terminal domain. [4Fe-4S] cluster contacts are provided by C15, C50, C84, C159, C163, and C166. One can recognise a Radical SAM core domain in the interval 145-375 (LSPKQYAYVK…MELQHDIAYE (231 aa)). One can recognise a TRAM domain in the interval 378–445 (QRWVGQTLKV…SYDLMGEVVQ (68 aa)).

It belongs to the methylthiotransferase family. RimO subfamily. [4Fe-4S] cluster serves as cofactor.

The protein localises to the cytoplasm. It catalyses the reaction L-aspartate(89)-[ribosomal protein uS12]-hydrogen + (sulfur carrier)-SH + AH2 + 2 S-adenosyl-L-methionine = 3-methylsulfanyl-L-aspartate(89)-[ribosomal protein uS12]-hydrogen + (sulfur carrier)-H + 5'-deoxyadenosine + L-methionine + A + S-adenosyl-L-homocysteine + 2 H(+). Its function is as follows. Catalyzes the methylthiolation of an aspartic acid residue of ribosomal protein uS12. The protein is Ribosomal protein uS12 methylthiotransferase RimO of Desulfitobacterium hafniense (strain Y51).